The sequence spans 106 residues: Thiosulfate sulfurtransferase GlpE (106 aa).

The Rhodanese domain occupies 16 to 104; the sequence is REQGAVLVDV…WRATYPDETV (89 aa). Catalysis depends on Cys-64, which acts as the Cysteine persulfide intermediate.

Belongs to the GlpE family.

The protein resides in the cytoplasm. It catalyses the reaction thiosulfate + hydrogen cyanide = thiocyanate + sulfite + 2 H(+). It carries out the reaction thiosulfate + [thioredoxin]-dithiol = [thioredoxin]-disulfide + hydrogen sulfide + sulfite + 2 H(+). Functionally, transferase that catalyzes the transfer of sulfur from thiosulfate to thiophilic acceptors such as cyanide or dithiols. May function in a CysM-independent thiosulfate assimilation pathway by catalyzing the conversion of thiosulfate to sulfite, which can then be used for L-cysteine biosynthesis. This is Thiosulfate sulfurtransferase GlpE from Pseudomonas savastanoi pv. phaseolicola (strain 1448A / Race 6) (Pseudomonas syringae pv. phaseolicola (strain 1448A / Race 6)).